Consider the following 435-residue polypeptide: Trigger factor (435 aa).

In terms of domain architecture, PPIase FKBP-type spans 163–248; sequence GDRVTIDFEG…LTRIEAQNLP (86 aa).

Belongs to the FKBP-type PPIase family. Tig subfamily.

It is found in the cytoplasm. It catalyses the reaction [protein]-peptidylproline (omega=180) = [protein]-peptidylproline (omega=0). Its function is as follows. Involved in protein export. Acts as a chaperone by maintaining the newly synthesized protein in an open conformation. Functions as a peptidyl-prolyl cis-trans isomerase. The polypeptide is Trigger factor (Leptothrix cholodnii (strain ATCC 51168 / LMG 8142 / SP-6) (Leptothrix discophora (strain SP-6))).